We begin with the raw amino-acid sequence, 191 residues long: Chromobox protein homolog 5 (191 aa).

The tract at residues Met-1–Val-21 is disordered. 4 positions are modified to phosphoserine: Ser-11, Ser-12, Ser-13, and Ser-14. The region spanning Tyr-20–Asn-78 is the Chromo 1 domain. Lys-32 is covalently cross-linked (Glycyl lysine isopeptide (Lys-Gly) (interchain with G-Cter in SUMO2)). Residue Lys-40 is modified to N6-acetyllysine. Residues Tyr-70–Phe-117 are disordered. Positions Met-73–Lys-89 are enriched in basic and acidic residues. A Glycyl lysine isopeptide (Lys-Gly) (interchain with G-Cter in SUMO2) cross-link involves residue Lys-91. Phosphoserine occurs at positions 92, 93, 95, and 97. Residues Lys-102, Lys-106, Lys-154, and Lys-184 each participate in a glycyl lysine isopeptide (Lys-Gly) (interchain with G-Cter in SUMO2) cross-link. A Chromo 2; shadow subtype domain is found at Leu-121–Glu-179.

As to quaternary structure, homodimer. Interacts with histone H3 methylated at 'Lys-9'. Interacts (via Chromo 2; shadow subtype domain) with the MIS12 complex subunit NSL1; the interaction is direct, involves dimeric CBX5, and occurs during interphase. Interacts with POGZ; POGZ and PXVXL motif-containing proteins such as INCENP and TRIM28 compete for interaction with CBX5. Interacts with LRIF1 (via PxVxL motif). Interacts with INCENP. Interacts with TRIM24. Interacts (via the chromoshadow domain) with ATRX; the interaction is direct. Interacts (via the chromoshadow domain) with CHAF1A; the interaction is direct. Interacts (via the chromoshadow domain) with LBR; the interaction is direct. Interacts (via the chromoshadow domain) with NIPBL; the interaction is direct. Interacts (via the chromoshadow domain) with SP100; the interaction is direct. Interacts (via the chromoshadow domain) with STAM2; the interaction is direct. Interacts (via the chromoshadow domain) with TRIM28; the interaction is direct. Interacts (via the chromoshadow domain) with CBX3; the interaction is direct. Interacts with PRR14 (via N-terminus). Interacts with RRP1B. Interacts with HNRNPU (via C-terminus); this interaction is, at least in part, RNA-dependent. Interacts with ZNF263; recruited to the SIX3 promoter along with other proteins involved in chromatin modification and transcriptional corepression where it contributes to transcriptional repression. Interacts with AURKB during mitosis. Interacts with CHAMP1. Interacts with BAHD1. Interacts with HP1BP3. Interacts with CHD3. Interacts with CHD4. Interacts with SMYD5. Interacts with KMT5B. Interacts with KMT5C. In terms of processing, phosphorylation of HP1 and LBR may be responsible for some of the alterations in chromatin organization and nuclear structure which occur at various times during the cell cycle. Phosphorylated during interphase and possibly hyper-phosphorylated during mitosis. Post-translationally, ubiquitinated.

It is found in the nucleus. The protein resides in the chromosome. The protein localises to the centromere. Functionally, component of heterochromatin that recognizes and binds histone H3 tails methylated at 'Lys-9' (H3K9me), leading to epigenetic repression. In contrast, it is excluded from chromatin when 'Tyr-41' of histone H3 is phosphorylated (H3Y41ph). May contribute to the association of heterochromatin with the inner nuclear membrane by interactions with the lamin-B receptor (LBR). Involved in the formation of kinetochore through interaction with the MIS12 complex subunit NSL1. Required for the formation of the inner centromere. Its function is as follows. Component of heterochromatin that recognizes and binds histone H3 tails methylated at 'Lys-9' (H3K9me), leading to epigenetic repression. In contrast, it is excluded from chromatin when 'Tyr-41' of histone H3 is phosphorylated (H3Y41ph). Can interact with lamin-B receptor (LBR). This interaction can contribute to the association of the heterochromatin with the inner nuclear membrane. Involved in the formation of functional kinetochore through interaction with MIS12 complex proteins. In Mus musculus (Mouse), this protein is Chromobox protein homolog 5 (Cbx5).